The primary structure comprises 524 residues: Na(+)/H(+) antiporter NhaB (524 aa).

9 helical membrane passes run 13-33, 98-118, 140-160, 239-259, 304-324, 325-345, 358-378, 448-468, and 479-499; these read FLGNSPDWYKLAIMGFLIINP, LLLVFMVAGIYFMKQLLLFVF, AFLSAFLDALTVIAVVISVSV, FFIRMLPVTLPVFIFGLLVCL, AIIGVWLVLALALHLAEVGLV, GLSVIILATSFCGITNEHSLG, LTVFFAVVAVIIEQSLFTPII, ATPNGQAAFLFLLTSALAPLI, and ALPYTLVMTIVGLLGVEFLLV.

This sequence belongs to the NhaB Na(+)/H(+) (TC 2.A.34) antiporter family.

It localises to the cell inner membrane. The catalysed reaction is 2 Na(+)(in) + 3 H(+)(out) = 2 Na(+)(out) + 3 H(+)(in). Its function is as follows. Na(+)/H(+) antiporter that extrudes sodium in exchange for external protons. The protein is Na(+)/H(+) antiporter NhaB of Yersinia pseudotuberculosis serotype I (strain IP32953).